The sequence spans 245 residues: Thiopurine S-methyltransferase (245 aa).

S14 is modified (phosphoserine). 29-40 lines the S-adenosyl-L-methionine pocket; it reads WREKWVDGKIGF. F40 lines the substrate pocket. K58 is modified (N6-acetyllysine). 3 residues coordinate S-adenosyl-L-methionine: L69, E90, and R152.

The protein belongs to the class I-like SAM-binding methyltransferase superfamily. TPMT family. Monomer.

The protein localises to the cytoplasm. The catalysed reaction is S-adenosyl-L-methionine + a thiopurine = S-adenosyl-L-homocysteine + a thiopurine S-methylether.. In Panthera tigris (Tiger), this protein is Thiopurine S-methyltransferase (TPMT).